The chain runs to 164 residues: Crossover junction endodeoxyribonuclease RuvC (164 aa).

Active-site residues include aspartate 7, glutamate 67, and aspartate 140. Residues aspartate 7, glutamate 67, and aspartate 140 each contribute to the Mg(2+) site.

It belongs to the RuvC family. As to quaternary structure, homodimer which binds Holliday junction (HJ) DNA. The HJ becomes 2-fold symmetrical on binding to RuvC with unstacked arms; it has a different conformation from HJ DNA in complex with RuvA. In the full resolvosome a probable DNA-RuvA(4)-RuvB(12)-RuvC(2) complex forms which resolves the HJ. Mg(2+) is required as a cofactor.

It localises to the cytoplasm. The catalysed reaction is Endonucleolytic cleavage at a junction such as a reciprocal single-stranded crossover between two homologous DNA duplexes (Holliday junction).. The RuvA-RuvB-RuvC complex processes Holliday junction (HJ) DNA during genetic recombination and DNA repair. Endonuclease that resolves HJ intermediates. Cleaves cruciform DNA by making single-stranded nicks across the HJ at symmetrical positions within the homologous arms, yielding a 5'-phosphate and a 3'-hydroxyl group; requires a central core of homology in the junction. The consensus cleavage sequence is 5'-(A/T)TT(C/G)-3'. Cleavage occurs on the 3'-side of the TT dinucleotide at the point of strand exchange. HJ branch migration catalyzed by RuvA-RuvB allows RuvC to scan DNA until it finds its consensus sequence, where it cleaves and resolves the cruciform DNA. The polypeptide is Crossover junction endodeoxyribonuclease RuvC (Finegoldia magna (strain ATCC 29328 / DSM 20472 / WAL 2508) (Peptostreptococcus magnus)).